The primary structure comprises 229 residues: Platelet-activating factor acetylhydrolase IB subunit alpha2 (229 aa).

Residues serine 48, aspartate 193, and histidine 196 contribute to the active site.

It belongs to the 'GDSL' lipolytic enzyme family. Platelet-activating factor acetylhydrolase IB beta/gamma subunits subfamily. Forms a catalytic dimer which is either homodimer (alpha2/alpha2 homodimer) or heterodimer with PAFAH1B3 (alpha2/alpha1 heterodimer). Component of the cytosolic (PAF-AH (I)) heterotetrameric enzyme, which is composed of PAFAH1B1 (beta), PAFAH1B2 (alpha2) and PAFAH1B3 (alpha1) subunits. The catalytic activity of the enzyme resides in the alpha1 (PAFAH1B3) and alpha2 (PAFAH1B2) subunits, whereas the beta subunit (PAFAH1B1) has regulatory activity. Trimer formation is not essential for the catalytic activity.

It is found in the cytoplasm. It carries out the reaction a 1-O-alkyl-2-acetyl-sn-glycero-3-phosphocholine + H2O = a 1-O-alkyl-sn-glycero-3-phosphocholine + acetate + H(+). The enzyme catalyses 1-O-hexadecyl-2-acetyl-sn-glycero-3-phosphocholine + H2O = 1-O-hexadecyl-sn-glycero-3-phosphocholine + acetate + H(+). The catalysed reaction is 1-O-hexadecyl-2-acetyl-sn-glycero-3-phosphate + H2O = 1-O-hexadecyl-sn-glycero-3-phosphate + acetate + H(+). It catalyses the reaction 1-O-hexadecyl-2-acetyl-sn-glycero-3-phosphoethanolamine + H2O = 1-O-hexadecyl-sn-glycero-3-phosphoethanolamine + acetate + H(+). Its function is as follows. Alpha2 catalytic subunit of the cytosolic type I platelet-activating factor (PAF) acetylhydrolase (PAF-AH (I)) heterotetrameric enzyme that catalyzes the hydrolyze of the acetyl group at the sn-2 position of PAF and its analogs and modulates the action of PAF. The protein is Platelet-activating factor acetylhydrolase IB subunit alpha2 (PAFAH1B2) of Gallus gallus (Chicken).